A 113-amino-acid polypeptide reads, in one-letter code: UPF0482 protein YnfB (113 aa).

The first 28 residues, 1 to 28 (MNILSGKLPFLLGAVFAGSVVLATSVQA), serve as a signal peptide directing secretion.

Belongs to the UPF0482 family.

This is UPF0482 protein YnfB from Escherichia fergusonii (strain ATCC 35469 / DSM 13698 / CCUG 18766 / IAM 14443 / JCM 21226 / LMG 7866 / NBRC 102419 / NCTC 12128 / CDC 0568-73).